A 351-amino-acid chain; its full sequence is MKKQLDQLTAYTPGLSPESLKKQYGIRGELHKLASNENVYGPSPKVKTAIQSHLDELYYYPESGSPKLREAISQQLNVDASRILFGAGLDEVILMISRAVLSPGDKIITSESTFGQYYHNAIVESADVIQVPLKDGGFDLDGMLQQIDNKTSLIWLCNPNNPTGTYFSHDELFNFLKRVPSDIPVLIDEAYVEFVTADDFPDTLKLQEDFDNAFLLRTFSKAYGLAGLRVGYVIASEDAIEKWNIIRPPFNVTRISEYAAIAALEDQEYLKEVTQKNSFERDKFYQIPQSQHFLPSQANFVFVKTSRSQALYDALLNVGCITRLFPNGVRITIGLPEQNNKMIEVLKHFEY.

Lys-221 bears the N6-(pyridoxal phosphate)lysine mark.

This sequence belongs to the class-II pyridoxal-phosphate-dependent aminotransferase family. Histidinol-phosphate aminotransferase subfamily. Homodimer. Requires pyridoxal 5'-phosphate as cofactor.

It carries out the reaction L-histidinol phosphate + 2-oxoglutarate = 3-(imidazol-4-yl)-2-oxopropyl phosphate + L-glutamate. It functions in the pathway amino-acid biosynthesis; L-histidine biosynthesis; L-histidine from 5-phospho-alpha-D-ribose 1-diphosphate: step 7/9. The protein is Histidinol-phosphate aminotransferase of Staphylococcus epidermidis (strain ATCC 12228 / FDA PCI 1200).